A 125-amino-acid chain; its full sequence is Large ribosomal subunit protein bL12 (125 aa).

The protein belongs to the bacterial ribosomal protein bL12 family. Homodimer. Part of the ribosomal stalk of the 50S ribosomal subunit. Forms a multimeric L10(L12)X complex, where L10 forms an elongated spine to which 2 to 4 L12 dimers bind in a sequential fashion. Binds GTP-bound translation factors.

Its function is as follows. Forms part of the ribosomal stalk which helps the ribosome interact with GTP-bound translation factors. Is thus essential for accurate translation. This is Large ribosomal subunit protein bL12 from Anaeromyxobacter dehalogenans (strain 2CP-1 / ATCC BAA-258).